We begin with the raw amino-acid sequence, 406 residues long: Argininosuccinate synthase (406 aa).

Residues 10–18 and A37 contribute to the ATP site; that span reads AYSGGLDTS. Y88 and S93 together coordinate L-citrulline. An ATP-binding site is contributed by G118. The L-aspartate site is built by T120, N124, and D125. N124 contributes to the L-citrulline binding site. L-citrulline contacts are provided by R128, S179, S188, E264, and Y276.

The protein belongs to the argininosuccinate synthase family. Type 1 subfamily. As to quaternary structure, homotetramer.

The protein resides in the cytoplasm. It catalyses the reaction L-citrulline + L-aspartate + ATP = 2-(N(omega)-L-arginino)succinate + AMP + diphosphate + H(+). Its pathway is amino-acid biosynthesis; L-arginine biosynthesis; L-arginine from L-ornithine and carbamoyl phosphate: step 2/3. The protein is Argininosuccinate synthase of Roseobacter denitrificans (strain ATCC 33942 / OCh 114) (Erythrobacter sp. (strain OCh 114)).